Here is an 857-residue protein sequence, read N- to C-terminus: DNA mismatch repair protein MutS (857 aa).

Residue 608–615 coordinates ATP; sequence GPNMSGKS.

Belongs to the DNA mismatch repair MutS family.

Its function is as follows. This protein is involved in the repair of mismatches in DNA. It is possible that it carries out the mismatch recognition step. This protein has a weak ATPase activity. In Lactobacillus johnsonii (strain CNCM I-12250 / La1 / NCC 533), this protein is DNA mismatch repair protein MutS.